We begin with the raw amino-acid sequence, 48 residues long: uncharacterized protein (48 aa).

An N-terminal signal peptide occupies residues methionine 1–alanine 21.

This is an uncharacterized protein from Bacillus anthracis.